A 203-amino-acid chain; its full sequence is Histidine biosynthesis bifunctional protein HisIE (203 aa).

The tract at residues 1 to 114 (MLTEQQRREL…FGDTAHQWLF (114 aa)) is phosphoribosyl-AMP cyclohydrolase. The phosphoribosyl-ATP pyrophosphohydrolase stretch occupies residues 115-203 (LYQLEQLLAE…VIENLRKRHQ (89 aa)).

This sequence in the N-terminal section; belongs to the PRA-CH family. It in the C-terminal section; belongs to the PRA-PH family.

It localises to the cytoplasm. It catalyses the reaction 1-(5-phospho-beta-D-ribosyl)-ATP + H2O = 1-(5-phospho-beta-D-ribosyl)-5'-AMP + diphosphate + H(+). It carries out the reaction 1-(5-phospho-beta-D-ribosyl)-5'-AMP + H2O = 1-(5-phospho-beta-D-ribosyl)-5-[(5-phospho-beta-D-ribosylamino)methylideneamino]imidazole-4-carboxamide. It functions in the pathway amino-acid biosynthesis; L-histidine biosynthesis; L-histidine from 5-phospho-alpha-D-ribose 1-diphosphate: step 2/9. Its pathway is amino-acid biosynthesis; L-histidine biosynthesis; L-histidine from 5-phospho-alpha-D-ribose 1-diphosphate: step 3/9. The polypeptide is Histidine biosynthesis bifunctional protein HisIE (Escherichia coli O6:H1 (strain CFT073 / ATCC 700928 / UPEC)).